We begin with the raw amino-acid sequence, 74 residues long: Toxin BmKaTx17 (74 aa).

The first 8 residues, 1 to 8 (LLMTGVES), serve as a signal peptide directing secretion. In terms of domain architecture, LCN-type CS-alpha/beta spans 10 to 72 (RDAYIAKNYN…KPIRIPGKCH (63 aa)). Intrachain disulfides connect cysteine 20/cysteine 71, cysteine 24/cysteine 44, cysteine 30/cysteine 54, and cysteine 34/cysteine 56. Positions 73–74 (RR) are cleaved as a propeptide — removed by a carboxypeptidase.

It belongs to the long (4 C-C) scorpion toxin superfamily. Sodium channel inhibitor family. Alpha subfamily. As to expression, expressed by the venom gland.

It is found in the secreted. Functionally, alpha toxins bind voltage-independently at site-3 of sodium channels (Nav) and inhibit the inactivation of the activated channels, thereby blocking neuronal transmission. The chain is Toxin BmKaTx17 from Olivierus martensii (Manchurian scorpion).